Consider the following 518-residue polypeptide: Metalloprotease TIKI2 (518 aa).

The signal sequence occupies residues 1 to 22 (MNCQSGLRWLVTLCAFFQVGSA). The Extracellular portion of the chain corresponds to 23-499 (RDTHESTRQC…SALDSAAPNP (477 aa)). Asn-224, Asn-233, Asn-282, Asn-325, and Asn-340 each carry an N-linked (GlcNAc...) asparagine glycan. The helical transmembrane segment at 500 to 517 (TYALTCFLACLISQLLFA) threads the bilayer. Ser-518 is a topological domain (cytoplasmic).

Belongs to the TIKI family. It depends on Mn(2+) as a cofactor. Co(2+) is required as a cofactor.

The protein resides in the cell membrane. In terms of biological role, metalloprotease that acts as a negative regulator of the Wnt signaling pathway by mediating the cleavage of the N-terminal residues of a subset of Wnt proteins. Following cleavage, Wnt proteins become oxidized and form large disulfide-bond oligomers, leading to their inactivation. This Danio rerio (Zebrafish) protein is Metalloprotease TIKI2 (trabd2b).